Reading from the N-terminus, the 61-residue chain is Small ribosomal subunit protein uS14 (61 aa).

Residues cysteine 24, cysteine 27, cysteine 40, and cysteine 43 each contribute to the Zn(2+) site.

It belongs to the universal ribosomal protein uS14 family. Zinc-binding uS14 subfamily. As to quaternary structure, part of the 30S ribosomal subunit. Contacts proteins S3 and S10. Zn(2+) serves as cofactor.

In terms of biological role, binds 16S rRNA, required for the assembly of 30S particles and may also be responsible for determining the conformation of the 16S rRNA at the A site. This is Small ribosomal subunit protein uS14 from Leptospira borgpetersenii serovar Hardjo-bovis (strain JB197).